The sequence spans 308 residues: Elongation factor Ts (308 aa).

The segment at 80–83 (TDFV) is involved in Mg(2+) ion dislocation from EF-Tu.

Belongs to the EF-Ts family.

It localises to the cytoplasm. In terms of biological role, associates with the EF-Tu.GDP complex and induces the exchange of GDP to GTP. It remains bound to the aminoacyl-tRNA.EF-Tu.GTP complex up to the GTP hydrolysis stage on the ribosome. The polypeptide is Elongation factor Ts (Methylobacterium radiotolerans (strain ATCC 27329 / DSM 1819 / JCM 2831 / NBRC 15690 / NCIMB 10815 / 0-1)).